Consider the following 258-residue polypeptide: UPF0246 protein ABO_1338 (258 aa).

It belongs to the UPF0246 family.

The polypeptide is UPF0246 protein ABO_1338 (Alcanivorax borkumensis (strain ATCC 700651 / DSM 11573 / NCIMB 13689 / SK2)).